A 544-amino-acid chain; its full sequence is MKKAVILFSLFCFLCAIPVVQAADTIFVRETRIPILIERQDNVLFYLRLDAKESQTLNDVVLNLGEGVNLSEIQSIKLYYGGTEALQDSGKKRFAPVGYISSNTPGKTLAANPSYSIKKSEVTNPGNQVVLKGDQKLFPGINYFWISLQMKPGTSLTSKVTADIASITLDGKKALLDVVSENGIEHRMGVGVRHAGDDNSAAFRIPGLVTTNKGTLLGVYDVRYNSSVDLQEHVDVGLSRSTDGGKTWEKMRLPLAFGEFGGLPAGQNGVGDPSILVDTKTNNVWVVAAWTHGMGNQRAWWSSHPGMDMNHTAQLVLAKSTDDGKTWSAPINITEQVKDPSWYFLLQGPGRGITMSDGTLVFPTQFIDSTRVPNAGIMYSKDGGKNWKMHNYARTNTTEAQVAEVEPGVLMLNMRDNRGGSRAVAITKDLGKTWTEHESSRKALPESVCMASLISVKAKDNVLGKDLLIFSNPNTTKGRYNTTIKISLDGGVTWSPEHQLLLDEGNNWGYSCLSMIDKETIGILYESSVAHMTFQAVKLKDIIK.

A signal peptide spans 1–22 (MKKAVILFSLFCFLCAIPVVQA). BNR repeat units lie at residues 239 to 250 (SRSTDGGKTWEK), 318 to 329 (AKSTDDGKTWSA), and 378 to 389 (MYSKDGGKNWKM). E399 is an active-site residue. R415 serves as a coordination point for substrate. One copy of the BNR 4 repeat lies at 425-436 (AITKDLGKTWTE). Residue R479 participates in substrate binding. The stretch at 485–496 (KISLDGGVTWSP) is one BNR 5 repeat.

Belongs to the glycosyl hydrolase 33 family.

It localises to the periplasm. The catalysed reaction is Hydrolysis of alpha-(2-&gt;3)-, alpha-(2-&gt;6)-, alpha-(2-&gt;8)- glycosidic linkages of terminal sialic acid residues in oligosaccharides, glycoproteins, glycolipids, colominic acid and synthetic substrates.. Functionally, sialidases have been suggested to be pathogenic factors in microbial infections. The sequence is that of Sialidase (nanH) from Bacteroides fragilis (strain YCH46).